Reading from the N-terminus, the 944-residue chain is Tyrosine-protein kinase transmembrane receptor ROR2 (944 aa).

A signal peptide spans 1 to 33 (MARGWVRPSRVPLCARAVWTAAALLLWTPWTAG). The Extracellular portion of the chain corresponds to 34–403 (EVEDSEAIDT…CSPRDGSKMG (370 aa)). The region spanning 55–145 (PTLKGYFLNF…VATNGLKTIT (91 aa)) is the Ig-like C2-type domain. Residue asparagine 70 is glycosylated (N-linked (GlcNAc...) asparagine). Disulfide bonds link cysteine 83–cysteine 135, cysteine 174–cysteine 239, cysteine 182–cysteine 232, cysteine 223–cysteine 264, cysteine 252–cysteine 300, cysteine 256–cysteine 286, cysteine 316–cysteine 394, cysteine 337–cysteine 377, and cysteine 365–cysteine 389. The FZ domain maps to 169 to 303 (QEDGFCQPYR…SPDAANCMRI (135 aa)). Residue asparagine 188 is glycosylated (N-linked (GlcNAc...) asparagine). Positions 316–394 (CYNGSGADYR…RVELCDVPPC (79 aa)) constitute a Kringle domain. An N-linked (GlcNAc...) asparagine glycan is attached at asparagine 318. The helical transmembrane segment at 404–424 (ILYILVPSIAIPLVIACLFFL) threads the bilayer. Residues 425 to 944 (VCMCRNKQKA…TEAAHVQLEA (520 aa)) are Cytoplasmic-facing. Positions 473 to 746 (VRFMEELGED…PRFKDIHSRL (274 aa)) constitute a Protein kinase domain. ATP is bound by residues 479–487 (LGEDRFGKV) and lysine 507. Residue aspartate 615 is the Proton acceptor of the active site. A Phosphotyrosine; by autocatalysis modification is found at tyrosine 646. Residues 757–779 (SSAQTSGASNTTQTSSLSTSPVS) are disordered. Low complexity predominate over residues 765 to 779 (SNTTQTSSLSTSPVS). Arginine 785 bears the Asymmetric dimethylarginine mark. Disordered stretches follow at residues 850 to 879 (QVPPQMVPKPSSHHSGSGSTSTGYVTTAPS) and 898 to 929 (QNIAEDVAQSPVQEAEEEEEGSVPETELLGDN). Low complexity predominate over residues 857-872 (PKPSSHHSGSGSTSTG).

It belongs to the protein kinase superfamily. Tyr protein kinase family. ROR subfamily. Homodimer; promotes osteogenesis. Binds YWHAB. Interacts with WTIP. Interacts with ROR2. Requires Mg(2+) as cofactor.

Its subcellular location is the cell membrane. It carries out the reaction L-tyrosyl-[protein] + ATP = O-phospho-L-tyrosyl-[protein] + ADP + H(+). In terms of biological role, tyrosine-protein kinase receptor which may be involved in the early formation of the chondrocytes. It seems to be required for cartilage and growth plate development. Phosphorylates YWHAB, leading to induction of osteogenesis and bone formation. In contrast, has also been shown to have very little tyrosine kinase activity in vitro. May act as a receptor for wnt ligand WNT5A which may result in the inhibition of WNT3A-mediated signaling. This chain is Tyrosine-protein kinase transmembrane receptor ROR2 (Ror2), found in Mus musculus (Mouse).